The primary structure comprises 352 residues: Protein NDRG4 (352 aa).

4 positions are modified to phosphoserine: K293, S298, S317, and S323. A disordered region spans residues 301–352; it reads AVPSASMTRLARSRTASLTSASSVDGSRPQPCAHSDSSEGMGQVNHTMEVSC. The segment covering 308-323 has biased composition (low complexity); the sequence is TRLARSRTASLTSASS. Polar residues predominate over residues 338–352; that stretch reads SEGMGQVNHTMEVSC.

Belongs to the NDRG family. In terms of tissue distribution, predominantly expressed in the brain (at protein level). Detected in neurons of various parts of brain, including the olfactory bulb, olfactory tuberculum, cerebral cortex, striatum, hippocampus, dentate gyrus, thalamus, hypothalamus, mesencephalon, cerebellum, pons and medulla oblongata.

Its subcellular location is the cytoplasm. It localises to the cytosol. Functionally, contributes to the maintenance of intracerebral BDNF levels within the normal range, which is necessary for the preservation of spatial learning and the resistance to neuronal cell death caused by ischemic stress. May enhance growth factor-induced ERK1 and ERK2 phosphorylation. May attenuate NGF-promoted ELK1 phosphorylation in a microtubule-dependent manner. The polypeptide is Protein NDRG4 (Ndrg4) (Mus musculus (Mouse)).